The following is a 112-amino-acid chain: T cell receptor alpha variable 30 (112 aa).

The N-terminal stretch at Met-1–Ser-21 is a signal peptide. An Ig-like domain is found at Pro-24–Glu-112. N-linked (GlcNAc...) asparagine glycosylation is present at Asn-42. Cysteines 43 and 109 form a disulfide.

Alpha-beta TR is a heterodimer composed of an alpha and beta chain; disulfide-linked. The alpha-beta TR is associated with the transmembrane signaling CD3 coreceptor proteins to form the TR-CD3 (TcR or TCR). The assembly of alpha-beta TR heterodimers with CD3 occurs in the endoplasmic reticulum where a single alpha-beta TR heterodimer associates with one CD3D-CD3E heterodimer, one CD3G-CD3E heterodimer and one CD247 homodimer forming a stable octameric structure. CD3D-CD3E and CD3G-CD3E heterodimers preferentially associate with TR alpha and TR beta chains, respectively. The association of the CD247 homodimer is the last step of TcR assembly in the endoplasmic reticulum and is required for transport to the cell surface.

The protein localises to the cell membrane. V region of the variable domain of T cell receptor (TR) alpha chain that participates in the antigen recognition. Alpha-beta T cell receptors are antigen specific receptors which are essential to the immune response and are present on the cell surface of T lymphocytes. Recognize peptide-major histocompatibility (MH) (pMH) complexes that are displayed by antigen presenting cells (APC), a prerequisite for efficient T cell adaptive immunity against pathogens. Binding of alpha-beta TR to pMH complex initiates TR-CD3 clustering on the cell surface and intracellular activation of LCK that phosphorylates the ITAM motifs of CD3G, CD3D, CD3E and CD247 enabling the recruitment of ZAP70. In turn ZAP70 phosphorylates LAT, which recruits numerous signaling molecules to form the LAT signalosome. The LAT signalosome propagates signal branching to three major signaling pathways, the calcium, the mitogen-activated protein kinase (MAPK) kinase and the nuclear factor NF-kappa-B (NF-kB) pathways, leading to the mobilization of transcription factors that are critical for gene expression and essential for T cell growth and differentiation. The T cell repertoire is generated in the thymus, by V-(D)-J rearrangement. This repertoire is then shaped by intrathymic selection events to generate a peripheral T cell pool of self-MH restricted, non-autoaggressive T cells. Post-thymic interaction of alpha-beta TR with the pMH complexes shapes TR structural and functional avidity. This is T cell receptor alpha variable 30 from Homo sapiens (Human).